A 291-amino-acid chain; its full sequence is 4-diphosphocytidyl-2-C-methyl-D-erythritol kinase (291 aa).

The active site involves lysine 10. Residue 94–104 coordinates ATP; that stretch reads PVSAGLAGGSS. The active site involves aspartate 136.

This sequence belongs to the GHMP kinase family. IspE subfamily.

It carries out the reaction 4-CDP-2-C-methyl-D-erythritol + ATP = 4-CDP-2-C-methyl-D-erythritol 2-phosphate + ADP + H(+). Its pathway is isoprenoid biosynthesis; isopentenyl diphosphate biosynthesis via DXP pathway; isopentenyl diphosphate from 1-deoxy-D-xylulose 5-phosphate: step 3/6. In terms of biological role, catalyzes the phosphorylation of the position 2 hydroxy group of 4-diphosphocytidyl-2C-methyl-D-erythritol. This Listeria monocytogenes serotype 4a (strain HCC23) protein is 4-diphosphocytidyl-2-C-methyl-D-erythritol kinase.